The sequence spans 65 residues: Pancreatic polypeptide prohormone (65 aa).

Y36 is modified (tyrosine amide). Positions 59–65 (ELSPMGA) are excised as a propeptide.

It belongs to the NPY family.

It localises to the secreted. Functionally, hormone secreted by pancreatic cells that acts as a regulator of pancreatic and gastrointestinal functions probably by signaling through the G protein-coupled receptor NPY4R2. The chain is Pancreatic polypeptide prohormone (PPY) from Sus scrofa (Pig).